We begin with the raw amino-acid sequence, 223 residues long: Cytidylate kinase (223 aa).

10-18 (GPAGAGKST) lines the ATP pocket.

This sequence belongs to the cytidylate kinase family. Type 1 subfamily.

The protein resides in the cytoplasm. The catalysed reaction is CMP + ATP = CDP + ADP. The enzyme catalyses dCMP + ATP = dCDP + ADP. The polypeptide is Cytidylate kinase (Exiguobacterium sibiricum (strain DSM 17290 / CCUG 55495 / CIP 109462 / JCM 13490 / 255-15)).